Reading from the N-terminus, the 183-residue chain is ATP synthase subunit delta (183 aa).

It belongs to the ATPase delta chain family. F-type ATPases have 2 components, F(1) - the catalytic core - and F(0) - the membrane proton channel. F(1) has five subunits: alpha(3), beta(3), gamma(1), delta(1), epsilon(1). CF(0) has four main subunits: a(1), b(1), b'(1) and c(10-14). The alpha and beta chains form an alternating ring which encloses part of the gamma chain. F(1) is attached to F(0) by a central stalk formed by the gamma and epsilon chains, while a peripheral stalk is formed by the delta, b and b' chains.

It is found in the cellular thylakoid membrane. Functionally, f(1)F(0) ATP synthase produces ATP from ADP in the presence of a proton or sodium gradient. F-type ATPases consist of two structural domains, F(1) containing the extramembraneous catalytic core and F(0) containing the membrane proton channel, linked together by a central stalk and a peripheral stalk. During catalysis, ATP synthesis in the catalytic domain of F(1) is coupled via a rotary mechanism of the central stalk subunits to proton translocation. Its function is as follows. This protein is part of the stalk that links CF(0) to CF(1). It either transmits conformational changes from CF(0) to CF(1) or is implicated in proton conduction. This is ATP synthase subunit delta from Prochlorococcus marinus (strain SARG / CCMP1375 / SS120).